The chain runs to 94 residues: Large ribosomal subunit protein bL25 (94 aa).

Belongs to the bacterial ribosomal protein bL25 family. In terms of assembly, part of the 50S ribosomal subunit; part of the 5S rRNA/L5/L18/L25 subcomplex. Contacts the 5S rRNA. Binds to the 5S rRNA independently of L5 and L18.

Functionally, this is one of the proteins that binds to the 5S RNA in the ribosome where it forms part of the central protuberance. This Pectobacterium atrosepticum (strain SCRI 1043 / ATCC BAA-672) (Erwinia carotovora subsp. atroseptica) protein is Large ribosomal subunit protein bL25.